A 347-amino-acid chain; its full sequence is Sulfate/thiosulfate import ATP-binding protein CysA 1 (347 aa).

The region spanning 3–237 is the ABC transporter domain; sequence VRVESLRKEF…PVSPFVYGFI (235 aa). 35–42 contributes to the ATP binding site; that stretch reads GPSGSGKT.

Belongs to the ABC transporter superfamily. Sulfate/tungstate importer (TC 3.A.1.6) family. The complex is composed of two ATP-binding proteins (CysA), two transmembrane proteins (CysT and CysW) and a solute-binding protein (CysP).

It is found in the cell inner membrane. It carries out the reaction sulfate(out) + ATP + H2O = sulfate(in) + ADP + phosphate + H(+). It catalyses the reaction thiosulfate(out) + ATP + H2O = thiosulfate(in) + ADP + phosphate + H(+). Functionally, part of the ABC transporter complex CysAWTP involved in sulfate/thiosulfate import. Responsible for energy coupling to the transport system. This Rhizobium meliloti (strain 1021) (Ensifer meliloti) protein is Sulfate/thiosulfate import ATP-binding protein CysA 1.